The following is a 383-amino-acid chain: Acetylornithine deacetylase (383 aa).

His80 lines the Zn(2+) pocket. Asp82 is a catalytic residue. Zn(2+) is bound at residue Asp112. Residue Glu144 is part of the active site. Residues Glu145, Glu169, and His355 each contribute to the Zn(2+) site.

Belongs to the peptidase M20A family. ArgE subfamily. In terms of assembly, homodimer. Zn(2+) is required as a cofactor. Requires Co(2+) as cofactor. It depends on glutathione as a cofactor.

The protein resides in the cytoplasm. It carries out the reaction N(2)-acetyl-L-ornithine + H2O = L-ornithine + acetate. Its pathway is amino-acid biosynthesis; L-arginine biosynthesis; L-ornithine from N(2)-acetyl-L-ornithine (linear): step 1/1. In terms of biological role, catalyzes the hydrolysis of the amide bond of N(2)-acetylated L-amino acids. Cleaves the acetyl group from N-acetyl-L-ornithine to form L-ornithine, an intermediate in L-arginine biosynthesis pathway, and a branchpoint in the synthesis of polyamines. The protein is Acetylornithine deacetylase of Escherichia coli O127:H6 (strain E2348/69 / EPEC).